Reading from the N-terminus, the 230-residue chain is Orotidine 5'-phosphate decarboxylase (230 aa).

Residues Asp-10, Lys-31, 58 to 67, Thr-117, Arg-179, Gln-188, Gly-208, and Arg-209 each bind substrate; that span reads DLKLHDIPNT. Lys-60 functions as the Proton donor in the catalytic mechanism.

The protein belongs to the OMP decarboxylase family. Type 1 subfamily. In terms of assembly, homodimer.

The catalysed reaction is orotidine 5'-phosphate + H(+) = UMP + CO2. It participates in pyrimidine metabolism; UMP biosynthesis via de novo pathway; UMP from orotate: step 2/2. Its function is as follows. Catalyzes the decarboxylation of orotidine 5'-monophosphate (OMP) to uridine 5'-monophosphate (UMP). The protein is Orotidine 5'-phosphate decarboxylase of Staphylococcus haemolyticus (strain JCSC1435).